We begin with the raw amino-acid sequence, 365 residues long: Fatty acid hydroxylase vlmA (365 aa).

Residues 20 to 41 (TTIKRRQNDKTKTPKTKPVSKI) form a disordered region. Asn-47 carries an N-linked (GlcNAc...) asparagine glycan. 4 consecutive transmembrane segments (helical) span residues 62–82 (ILLQSLLPITVHQLTTLVLSI), 89–109 (VHPFLLRLCVIIGYGYAFRFL), 144–164 (LNWSLPLTVGSRTVMCVLVAY), and 179–199 (WWAWLAVYLSLYPIILDFYYY). The Fatty acid hydroxylase domain occupies 189 to 335 (LYPIILDFYY…TRIWDRLFGT (147 aa)).

This sequence belongs to the sterol desaturase family. TMEM195 subfamily.

It localises to the membrane. The protein operates within secondary metabolite biosynthesis. In terms of biological role, fatty acid hydroxylase; part of the gene cluster that mediates the biosynthesis of verlamelin, a lipopeptide that exhibits antifungal activity against plant pathogenic fungi. Verlamelin is a cyclic hexadepsipeptide and is bridged by ester bonding between a 5-hydroxytetradecanoic acid moiety and a carboxyl group on the terminal Val of amide-bonded tetradecanoyl-hexapeptide D-allo-Thr-D-Ala-L-Pro-L-Gln-D-Tyr-L-Val. VlmA and vlmB are altogether regarded as essential components in the biosynthesis of 5-hydroxytetradecanoic acid. VlmA catalyzes the hydroxylation at position C5 of tetradecanoic acid produced in primary metabolism, while the precise function of vlmB still remains to be solved. To be loaded onto the waiting NRPS, 5-hydroxytetradecanoic acid is activated in the form of acyladenylate by the AMP-dependent ligase vlmC. VlmS seems to accept the fatty-acyl intermediate onto the initial module to further elongate amino acid residues by the downstream modules. In addition, in the last module at its C-terminus, vlmS contains a surplus condensation (C) domain that may be involved in cyclization, the last step to form verlamelin. The protein is Fatty acid hydroxylase vlmA of Lecanicillium sp.